We begin with the raw amino-acid sequence, 216 residues long: Elongation factor 1-beta (216 aa).

The segment at 71-131 is disordered; it reads GQASGVSASS…AKKKESGKSS (61 aa). The segment covering 73–89 has biased composition (low complexity); the sequence is ASGVSASSAPAAAAPAA. A compositionally biased stretch (acidic residues) spans 92-107; sequence DEDDDDDMDLFGDETE. The segment covering 108–128 has biased composition (basic and acidic residues); sequence EDKKAAAEREAAKPAKKKESG.

This sequence belongs to the EF-1-beta/EF-1-delta family. EF-1 is composed of 4 subunits: alpha, beta (1B-alpha=beta'), delta (1B-beta), and gamma (1B-gamma).

Its function is as follows. EF-1-beta and EF-1-beta' stimulate the exchange of GDP bound to EF-1-alpha to GTP. This Triticum aestivum (Wheat) protein is Elongation factor 1-beta.